Consider the following 284-residue polypeptide: Prestalk D11 protein (284 aa).

The signal sequence occupies residues 1-25 (MLNKLILLLILSSCLVLSVKSEVNV). The stretch at 25–64 (VDCSLVRCAQPICKPHYRLNMTDSCCGRCEPCTDVACTLQ) is one A-1 repeat. Residues 65–82 (VKYCQDGEVPTGCCPCTL) form a B-1 repeat. Residues 88-126 (DCSLVKCARPVCKPYYRLNMTDSCCGRCEPCTGVACTLQ) form an A-2 repeat. Residues 127-144 (IKYCKDGEVPTGCCPCTP) form a B-2 repeat. A C-1 repeat occupies 145–159 (QPTKKPDCSKVPCPK). The stretch at 161–178 (LKYCQEGELPTGCCPCTP) is one B-3 repeat. A C-2 repeat occupies 179–193 (QPTKKPDCSRVPCPK). The B-4 repeat unit spans residues 195–212 (LKYCKEGELPTGCCPCTP). The C-3 repeat unit spans residues 213 to 228 (QPTKKPDCSDVMCTMD). The stretch at 229 to 246 (IRYCKNGELPTGCCPCTP) is one B-5 repeat. Residues 247 to 262 (QETKVPDCSKAMCTMD) form a C-4 repeat. Residues 263–278 (IKYCKPGEKPFGCCPC) form a B-6 repeat.

In Dictyostelium discoideum (Social amoeba), this protein is Prestalk D11 protein (ampA).